A 169-amino-acid chain; its full sequence is Cell division inhibitor SulA (169 aa).

A ftsZ binding region spans residues 106–112; the sequence is ALRTGNY. The interval 162 to 169 is lon protease binding; that stretch reads KIHSNLYH.

The protein belongs to the SulA family. In terms of assembly, interacts with FtsZ. In terms of processing, is rapidly cleaved and degraded by the Lon protease once DNA damage is repaired.

In terms of biological role, component of the SOS system and an inhibitor of cell division. Accumulation of SulA causes rapid cessation of cell division and the appearance of long, non-septate filaments. In the presence of GTP, binds a polymerization-competent form of FtsZ in a 1:1 ratio, thus inhibiting FtsZ polymerization and therefore preventing it from participating in the assembly of the Z ring. This mechanism prevents the premature segregation of damaged DNA to daughter cells during cell division. This chain is Cell division inhibitor SulA, found in Escherichia coli O45:K1 (strain S88 / ExPEC).